We begin with the raw amino-acid sequence, 1086 residues long: Ribonuclease 3 (1086 aa).

Disordered regions lie at residues 1–77 (MSDE…DSPR) and 158–233 (CHSM…LRNF). Residues 13 to 23 (PKHKRARRKKY) show a composition bias toward basic residues. Basic and acidic residues predominate over residues 24-35 (QKEYQERHKEEM). Residues 43–53 (FQNQPSTSSAP) are compositionally biased toward polar residues. Residues 159–168 (HSMKGRKTPK) show a composition bias toward basic residues. Acidic residues predominate over residues 181-190 (VSDDSNDSQD). The span at 191–201 (EASTSEPTNRQ) shows a compositional bias: polar residues. A compositionally biased stretch (basic and acidic residues) spans 203-217 (PEADKTGEVKDEKQT). 2 RNase III domains span residues 607-781 (LDVF…LDGG) and 833-957 (FHAL…VDRG). Positions 694, 767, 770, 873, 943, and 946 each coordinate Mg(2+). The 76-residue stretch at 984-1059 (DAKSHLQQWC…AELALANLES (76 aa)) folds into the DRBM domain.

Belongs to the ribonuclease III family. Requires Mg(2+) as cofactor. It depends on Mn(2+) as a cofactor.

The protein localises to the nucleus. The catalysed reaction is Endonucleolytic cleavage to 5'-phosphomonoester.. Executes the initial step of microRNA (miRNA) processing in the nucleus, that is the cleavage of pri-miRNA to release pre-miRNA. Involved in pre-rRNA processing. Cleaves double-strand RNA and does not cleave single-strand RNA. Involved in fertility. Required for the function or synthesis of the let-7 miRNA. The protein is Ribonuclease 3 (drsh-1) of Caenorhabditis elegans.